The primary structure comprises 175 residues: Calcineurin subunit B (175 aa).

4 consecutive EF-hand domains span residues 21-56, 60-88, 90-125, and 131-166; these read DEIE…SANP, RIME…FSGR, SKDE…MVGS, and QLQQ…TEVA. Ca(2+) is bound by residues D34, D36, S38, S40, E45, D66, D68, S70, D72, E77, D103, D105, D107, E114, D144, D146, D148, Q150, and E155.

The protein belongs to the calcineurin regulatory subunit family. In terms of assembly, composed of a catalytic subunit (A) and a regulatory subunit (B).

Its function is as follows. Regulatory subunit of calcineurin, a calcium-dependent, calmodulin stimulated protein phosphatase. Confers calcium sensitivity. The protein is Calcineurin subunit B (CNB1) of Candida glabrata (strain ATCC 2001 / BCRC 20586 / JCM 3761 / NBRC 0622 / NRRL Y-65 / CBS 138) (Yeast).